The following is a 285-amino-acid chain: MMSDYTWFEGIPFPAFWFSKEILENSCKKFVVKEDDLIILTYPKSGTNWLIEIVCLIQTKGDPKWIQSMPIWDRSPWIETGSGYDKLTKMEGPRLMTSHLPMHLFSKSLFSSKAKVIYLIRNPRDVLVSAYFFWSKIALEKKPDSLGTYVEWFLKGNVAYGSWFEHIRGWLSMREWDNFLVLYYEDMKKDTMGSIKKICDFLGKKLEPDELNLVLKYSSFQVVKENNMSNYSLMEKELILTGFTFMRKGTTNDWKNHFTVAQAEAFDKVFQEKMAGFPPGMFPWE.

Positions 44, 45, 46, 47, 48, and 49 each coordinate 3'-phosphoadenylyl sulfate. Histidine 99 (proton acceptor) is an active-site residue. 3'-phosphoadenylyl sulfate contacts are provided by arginine 121, serine 129, tyrosine 184, serine 218, arginine 247, lysine 248, and glycine 249.

This sequence belongs to the sulfotransferase 1 family. As to expression, detected in liver.

It is found in the cytoplasm. It catalyses the reaction an alcohol + 3'-phosphoadenylyl sulfate = an alkyl sulfate + adenosine 3',5'-bisphosphate + H(+). Its function is as follows. Sulfotransferase that utilizes 3'-phospho-5'-adenylyl sulfate (PAPS) as sulfonate donor to catalyze the sulfate conjugation of a potential wide variety of acceptor molecules bearing a hydroxyl group. Sulfonation increases the water solubility of most compounds, and therefore their renal excretion, but it can also result in bioactivation to form active metabolites. The sequence is that of Sulfotransferase 2A2 from Rattus norvegicus (Rat).